A 102-amino-acid chain; its full sequence is Iron-sulfur cluster assembly protein CyaY (102 aa).

This sequence belongs to the frataxin family.

In terms of biological role, involved in iron-sulfur (Fe-S) cluster assembly. May act as a regulator of Fe-S biogenesis. In Histophilus somni (strain 2336) (Haemophilus somnus), this protein is Iron-sulfur cluster assembly protein CyaY.